The sequence spans 158 residues: NAD(P)H-quinone oxidoreductase subunit J, chloroplastic (158 aa).

The protein belongs to the complex I 30 kDa subunit family. In terms of assembly, NDH is composed of at least 16 different subunits, 5 of which are encoded in the nucleus.

It is found in the plastid. Its subcellular location is the chloroplast thylakoid membrane. It catalyses the reaction a plastoquinone + NADH + (n+1) H(+)(in) = a plastoquinol + NAD(+) + n H(+)(out). It carries out the reaction a plastoquinone + NADPH + (n+1) H(+)(in) = a plastoquinol + NADP(+) + n H(+)(out). In terms of biological role, NDH shuttles electrons from NAD(P)H:plastoquinone, via FMN and iron-sulfur (Fe-S) centers, to quinones in the photosynthetic chain and possibly in a chloroplast respiratory chain. The immediate electron acceptor for the enzyme in this species is believed to be plastoquinone. Couples the redox reaction to proton translocation, and thus conserves the redox energy in a proton gradient. In Draba nemorosa (Woodland whitlowgrass), this protein is NAD(P)H-quinone oxidoreductase subunit J, chloroplastic.